A 667-amino-acid chain; its full sequence is Protein angel homolog 1 (667 aa).

Residues Ser77 and Ser105 each carry the phosphoserine modification.

It belongs to the CCR4/nocturin family.

The chain is Protein angel homolog 1 from Rattus norvegicus (Rat).